The following is a 216-amino-acid chain: Outer-membrane lipoprotein LolB (216 aa).

The signal sequence occupies residues 1 to 24 (MNNLNYFTKISASCAALALMTLAG). Residue cysteine 25 is the site of N-palmitoyl cysteine attachment. Residue cysteine 25 is the site of S-diacylglycerol cysteine attachment.

The protein belongs to the LolB family. Monomer.

It is found in the cell outer membrane. Its function is as follows. Plays a critical role in the incorporation of lipoproteins in the outer membrane after they are released by the LolA protein. This Shewanella loihica (strain ATCC BAA-1088 / PV-4) protein is Outer-membrane lipoprotein LolB.